The sequence spans 470 residues: tRNA(Ile)-lysidine synthase (470 aa).

32 to 37 serves as a coordination point for ATP; that stretch reads SGGVDS.

The protein belongs to the tRNA(Ile)-lysidine synthase family.

Its subcellular location is the cytoplasm. It carries out the reaction cytidine(34) in tRNA(Ile2) + L-lysine + ATP = lysidine(34) in tRNA(Ile2) + AMP + diphosphate + H(+). Ligates lysine onto the cytidine present at position 34 of the AUA codon-specific tRNA(Ile) that contains the anticodon CAU, in an ATP-dependent manner. Cytidine is converted to lysidine, thus changing the amino acid specificity of the tRNA from methionine to isoleucine. This Shewanella woodyi (strain ATCC 51908 / MS32) protein is tRNA(Ile)-lysidine synthase.